Reading from the N-terminus, the 289-residue chain is ATP synthase gamma chain (289 aa).

This sequence belongs to the ATPase gamma chain family. As to quaternary structure, F-type ATPases have 2 components, CF(1) - the catalytic core - and CF(0) - the membrane proton channel. CF(1) has five subunits: alpha(3), beta(3), gamma(1), delta(1), epsilon(1). CF(0) has three main subunits: a, b and c.

The protein resides in the cell inner membrane. In terms of biological role, produces ATP from ADP in the presence of a proton gradient across the membrane. The gamma chain is believed to be important in regulating ATPase activity and the flow of protons through the CF(0) complex. In Azorhizobium caulinodans (strain ATCC 43989 / DSM 5975 / JCM 20966 / LMG 6465 / NBRC 14845 / NCIMB 13405 / ORS 571), this protein is ATP synthase gamma chain.